Consider the following 592-residue polypeptide: Inactive metallocarboxypeptidase ECM14 (592 aa).

The N-terminal stretch at 1–21 is a signal peptide; sequence MRQFTHGTLLAILALANTISA. The propeptide occupies 22-174; it reads IPSFSANNYP…QTVYESYPSS (153 aa). Positions 170 to 179 are enriched in polar residues; that stretch reads SYPSSSQRPT. Residues 170–191 form a disordered region; sequence SYPSSSQRPTDNGRGFLPSRES. Residues 202-521 enclose the Peptidase M14 domain; that stretch reads DYQPLSVIGP…NAVMVLGKFL (320 aa). Zn(2+) contacts are provided by H264 and E267. Residues 264-267, R322, and 339-340 each bind substrate; these read HARE and DR. C333 and C356 form a disulfide bridge. N349 is a glycosylation site (N-linked (GlcNAc...) asparagine). H396 is a Zn(2+) binding site. Position 397–398 (397–398) interacts with substrate; it reads SY. The segment at 542-592 is disordered; the sequence is ADKPILDDGDDDEEEDGQDKNDDSWIPDEYKNDNDHDDDDDGWGLRRRRKR. A compositionally biased stretch (acidic residues) spans 548 to 558; sequence DDGDDDEEEDG. Over residues 559-575 the composition is skewed to basic and acidic residues; that stretch reads QDKNDDSWIPDEYKNDN.

The protein belongs to the peptidase M14 family. It depends on Zn(2+) as a cofactor.

The protein resides in the vacuole. It is found in the secreted. In terms of biological role, inactive carboxypeptidase that may play a role in cell wall organization and biogenesis. The sequence is that of Inactive metallocarboxypeptidase ECM14 (ECM14) from Blastomyces gilchristii (strain SLH14081) (Blastomyces dermatitidis).